The primary structure comprises 290 residues: Arylamine N-acetyltransferase 1 (290 aa).

N-acetylmethionine is present on methionine 1. The Acyl-thioester intermediate role is filled by cysteine 68. Residues threonine 103 and glycine 104 each contribute to the CoA site. Residue 106-107 participates in substrate binding; it reads IH. Residues histidine 107 and aspartate 122 contribute to the active site. The CoA site is built by tyrosine 208 and serine 214.

Belongs to the arylamine N-acetyltransferase family.

The protein localises to the cytoplasm. The enzyme catalyses an arylamine + acetyl-CoA = an N-acetylarylamine + CoA. Its function is as follows. Participates in the detoxification of a plethora of hydrazine and arylamine drugs. Catalyzes the N- or O-acetylation of various arylamine and heterocyclic amine substrates and is able to bioactivate several known carcinogens. The protein is Arylamine N-acetyltransferase 1 (NAT1) of Homo sapiens (Human).